A 236-amino-acid chain; its full sequence is Nopaline transport system permease protein NocQ (236 aa).

One can recognise an ABC transmembrane type-1 domain in the interval 21–222 (AMMTVVVAAC…LLSSVSNRGF (202 aa)). 4 consecutive transmembrane segments (helical) span residues 25 to 45 (VVVAACSYFFGIIFGSLFAAA), 63 to 83 (VVRGVPELLIIFLVFFGGGTL), 102 to 122 (IFVIGVLCISVSAGAYATEVI), and 199 to 219 (QPFTFYITAFVIFLLLSSVSN).

The protein belongs to the binding-protein-dependent transport system permease family. HisMQ subfamily.

It localises to the cell inner membrane. Component of the nopaline active transport system probably consisting of four subunits: Q, M, P and T. This system is also capable of transporting octopine provided that catabolic functions are induced with nopaline. This is Nopaline transport system permease protein NocQ (nocQ) from Agrobacterium fabrum (strain C58 / ATCC 33970) (Agrobacterium tumefaciens (strain C58)).